The following is a 376-amino-acid chain: Chaperone protein DnaJ (376 aa).

Residues 4 to 68 form the J domain; it reads DYYQLLGVAR…ETRARYDQFG (65 aa). A CR-type zinc finger spans residues 135–217; sequence GGEKEIRVTH…CGGAGRLRRP (83 aa). The Zn(2+) site is built by Cys-148, Cys-151, Cys-165, Cys-168, Cys-191, Cys-194, Cys-205, and Cys-208. CXXCXGXG motif repeat units lie at residues 148–155, 165–172, 191–198, and 205–212; these read CGTCQGSG, CTTCGGAG, CPTCEGSG, and CDDCGGAG.

The protein belongs to the DnaJ family. In terms of assembly, homodimer. Zn(2+) serves as cofactor.

The protein resides in the cytoplasm. Its function is as follows. Participates actively in the response to hyperosmotic and heat shock by preventing the aggregation of stress-denatured proteins and by disaggregating proteins, also in an autonomous, DnaK-independent fashion. Unfolded proteins bind initially to DnaJ; upon interaction with the DnaJ-bound protein, DnaK hydrolyzes its bound ATP, resulting in the formation of a stable complex. GrpE releases ADP from DnaK; ATP binding to DnaK triggers the release of the substrate protein, thus completing the reaction cycle. Several rounds of ATP-dependent interactions between DnaJ, DnaK and GrpE are required for fully efficient folding. Also involved, together with DnaK and GrpE, in the DNA replication of plasmids through activation of initiation proteins. The polypeptide is Chaperone protein DnaJ (Synechococcus sp. (strain ATCC 27144 / PCC 6301 / SAUG 1402/1) (Anacystis nidulans)).